A 407-amino-acid chain; its full sequence is MVSSTWGYDPRAGAGDLVITTTAAGAVTIAVLLFQTVCGDCGPPPDIPNARPILGRHSKFAEQSKVAYSCNNGFKQVPDKSNIVVCLENGQWSSHETFCEKSCDTPERLSFASLKKEYFNMNFFPVGTIVEYECRPGFRKQPSLSGKSTCLEDLVWSPVAQFCKKKSCPNPKDLDNGHINIPTGILFGSEINFSCNPGYRLVGITSILCTIIGNTVDWDDEFPVCTEIFCPDPPKINNGIMRGESDSYKYSQVVIYSCDKGFILFGNSTIYCTVSKSDVGQWSSPPPQCIEESKVPIKKPVVNVPSTGIPSTPQKPTTESVPNPGDQPTPQKPSTVKVPATQHEPDTTTRTSTDKGESNSGGDRYIYGFVAVIAMIDSLIIVKTLWTILSPNRRSDFQGKERKDVSK.

The N-terminal stretch at 1 to 39 (MVSSTWGYDPRAGAGDLVITTTAAGAVTIAVLLFQTVCG) is a signal peptide. 4 consecutive Sushi domains span residues 40-101 (DCGP…FCEK), 102-165 (SCDT…FCKK), 166-227 (KSCP…VCTE), and 228-291 (IFCP…QCIE). Over 40 to 368 (DCGPPPDIPN…NSGGDRYIYG (329 aa)) the chain is Extracellular. Intrachain disulfides connect Cys-41–Cys-86, Cys-70–Cys-99, Cys-103–Cys-150, Cys-134–Cys-163, Cys-168–Cys-209, Cys-195–Cys-225, Cys-230–Cys-272, and Cys-258–Cys-289. N-linked (GlcNAc...) asparagine glycosylation is present at Asn-192. The N-linked (GlcNAc...) asparagine glycan is linked to Asn-267. A disordered region spans residues 301 to 361 (VVNVPSTGIP…STDKGESNSG (61 aa)). Residues 306-324 (STGIPSTPQKPTTESVPNP) are compositionally biased toward polar residues. Positions 343–357 (HEPDTTTRTSTDKGE) are enriched in basic and acidic residues. Residues 369–389 (FVAVIAMIDSLIIVKTLWTIL) traverse the membrane as a helical segment. The Cytoplasmic segment spans residues 390 to 407 (SPNRRSDFQGKERKDVSK).

Belongs to the receptors of complement activation (RCA) family. As to expression, testis, spleen and lymph node.

It is found in the membrane. Functionally, this protein recognizes C4b and C3b fragments that condense with cell-surface hydroxyl or amino groups when nascent C4b and C3b are locally generated during C4 and c3 activation. Interaction of daf with cell-associated C4b and C3b polypeptides interferes with their ability to catalyze the conversion of C2 and factor B to enzymatically active C2a and Bb and thereby prevents the formation of C4b2a and C3bBb, the amplification convertases of the complement cascade. Inhibits complement activation by destabilizing and preventing the formation of C3 and C5 convertases, which prevents complement damage. This Mus musculus (Mouse) protein is Complement decay-accelerating factor transmembrane isoform (Cd55b).